The primary structure comprises 181 residues: Disulfide bond formation protein B (181 aa).

The Cytoplasmic segment spans residues 1-13; it reads MLSVGQWPNKPFA. Residues 14-30 form a helical membrane-spanning segment; that stretch reads WLLLFLGCSGLLGAALY. Over 31–48 the chain is Periplasmic; it reads FQMVLNLEPCVKCVYQRM. A disulfide bond links Cys40 and Cys43. A helical transmembrane segment spans residues 49–64; sequence AVIGIGLSAIVGLFGS. The Cytoplasmic portion of the chain corresponds to 65-71; sequence GLWLTRW. A helical membrane pass occupies residues 72 to 89; sequence AALIGWLYSSYQGLLIAY. The Periplasmic segment spans residues 90–145; sequence DHWDLQTSKNAFFAVCESAPNFPDWAPMHEWMPGLFAAPGLCGDIDWQWLGLGMPG. Cysteines 105 and 131 form a disulfide. Residues 146 to 164 form a helical membrane-spanning segment; that stretch reads WMTVIFAGLLLIGIIVTIC. Residues 165-181 are Cytoplasmic-facing; it reads HIISSFTKKDGLVLYHK.

This sequence belongs to the DsbB family.

It is found in the cell inner membrane. Functionally, required for disulfide bond formation in some periplasmic proteins. Acts by oxidizing the DsbA protein. The chain is Disulfide bond formation protein B from Idiomarina loihiensis (strain ATCC BAA-735 / DSM 15497 / L2-TR).